A 332-amino-acid chain; its full sequence is Biotin synthase (332 aa).

Residues 53 to 283 (WGKGGVHACS…VHPRKTIKFA (231 aa)) enclose the Radical SAM core domain. 3 residues coordinate [4Fe-4S] cluster: cysteine 71, cysteine 75, and cysteine 78. [2Fe-2S] cluster contacts are provided by cysteine 150, cysteine 211, and lysine 281.

The protein belongs to the radical SAM superfamily. Biotin synthase family. In terms of assembly, homodimer. [4Fe-4S] cluster is required as a cofactor. Requires [2Fe-2S] cluster as cofactor.

It carries out the reaction (4R,5S)-dethiobiotin + (sulfur carrier)-SH + 2 reduced [2Fe-2S]-[ferredoxin] + 2 S-adenosyl-L-methionine = (sulfur carrier)-H + biotin + 2 5'-deoxyadenosine + 2 L-methionine + 2 oxidized [2Fe-2S]-[ferredoxin]. The protein operates within cofactor biosynthesis; biotin biosynthesis; biotin from 7,8-diaminononanoate: step 2/2. In terms of biological role, catalyzes the conversion of dethiobiotin (DTB) to biotin by the insertion of a sulfur atom into dethiobiotin via a radical-based mechanism. This Chlorobium luteolum (strain DSM 273 / BCRC 81028 / 2530) (Pelodictyon luteolum) protein is Biotin synthase.